The following is a 224-amino-acid chain: UPF0758 protein Tbd_2588 (224 aa).

Residues 102-224 (ALSSPAAVRD…ALSFAEAGHL (123 aa)) enclose the MPN domain. 3 residues coordinate Zn(2+): histidine 173, histidine 175, and aspartate 186. The JAMM motif signature appears at 173-186 (HNHPSGVNEPSQAD).

The protein belongs to the UPF0758 family.

This chain is UPF0758 protein Tbd_2588, found in Thiobacillus denitrificans (strain ATCC 25259 / T1).